The chain runs to 207 residues: Abscisic acid receptor PYL4 (207 aa).

Residues 45–195 (HEVGPNQCCS…NLQSLAKIAE (151 aa)) form an START-like region. Cys52 and Cys176 form a disulfide bridge. Residues Lys81, 111–116 (AASSTE), 138–144 (RLSNYRS), and Glu160 contribute to the abscisate site. The Gate loop signature appears at 107 to 111 (SGLPA). A Latch loop motif is present at residues 137-139 (HRL).

The protein belongs to the PYR/PYL/RCAR abscisic acid intracellular receptor family. As to quaternary structure, monomer. Homodimer. Binds ABA on one subunit only. Interacts with HAB1, ABI1 and ABI2, and possibly with other PP2Cs. Binds to CARs protein in an ABA-independent manner, both at the plasma membrane and in the nucleus. Interacts directly with CAR1 and CAR4. Interacts with TOPP1. Interacts with DDA1. Interacts with FREE1 (via N-terminus). Interacts with the E3 ubiquitin-protein ligase RSL1 at the plasma membrane. Ubiquitynated and degraded by the proteasome upon binding to the E3 ubiquitin-protein ligase RSL1 at the plasma membrane.

Its subcellular location is the cytoplasm. It localises to the nucleus. It is found in the cell membrane. The protein localises to the vacuole. Receptor for abscisic acid (ABA) required for ABA-mediated responses such as stomatal closure and germination inhibition. Inhibits the activity of group-A protein phosphatases type 2C (PP2Cs) when activated by ABA. Can be activated by both (-)-ABA and (+)-ABA. This chain is Abscisic acid receptor PYL4, found in Arabidopsis thaliana (Mouse-ear cress).